The primary structure comprises 348 residues: Dihydroorotase (348 aa).

Residues histidine 14 and histidine 16 each coordinate Zn(2+). Substrate contacts are provided by residues 16 to 18 (HLR) and asparagine 42. Residues lysine 100, histidine 137, and histidine 175 each coordinate Zn(2+). Lysine 100 is subject to N6-carboxylysine. Histidine 137 serves as a coordination point for substrate. Leucine 220 provides a ligand contact to substrate. Aspartate 248 lines the Zn(2+) pocket. Aspartate 248 is an active-site residue. Residues histidine 252 and alanine 264 each coordinate substrate.

The protein belongs to the metallo-dependent hydrolases superfamily. DHOase family. Class II DHOase subfamily. In terms of assembly, homodimer. It depends on Zn(2+) as a cofactor.

The catalysed reaction is (S)-dihydroorotate + H2O = N-carbamoyl-L-aspartate + H(+). Its pathway is pyrimidine metabolism; UMP biosynthesis via de novo pathway; (S)-dihydroorotate from bicarbonate: step 3/3. In terms of biological role, catalyzes the reversible cyclization of carbamoyl aspartate to dihydroorotate. This is Dihydroorotase from Pseudomonas putida (strain W619).